The primary structure comprises 489 residues: 5'-AMP-activated protein kinase subunit gamma-3 (489 aa).

Residues 1–95 (MEPELEHTLP…TRQEATFPKA (95 aa)) form a disordered region. Residues 32–47 (GENSWPSPAVATSSER) show a composition bias toward polar residues. CBS domains lie at 197 to 258 (MATS…RSPL), 280 to 340 (CFKP…LLPR), and 355 to 415 (TFRD…HLDM). ADP contacts are provided by residues Arg-225, 240 to 245 (MLTITD), Val-285, 306 to 307 (HR), and Lys-325. Residues Arg-225, 240-245 (MLTITD), Val-285, His-306, 306-307 (HR), Lys-325, Thr-355, Ala-360, 381-382 (SA), 397-400 (SRFD), Arg-424, Leu-432, His-453, 453-454 (HR), and 469-472 (SLSD) each bind AMP. ATP-binding positions include Arg-225, 240–245 (MLTITD), Val-285, 306–307 (HR), Arg-307, and Lys-325. Positions 293–314 (LFEAVYALIKNRIHRLPVLDPV) match the AMPK pseudosubstrate motif. ADP is bound by residues 397-400 (SRFD), Arg-424, Leu-432, and 453-454 (HR). ATP-binding positions include 397–400 (SRFD), Arg-424, Leu-432, and 453–454 (HR). One can recognise a CBS 4 domain in the interval 427–486 (CLEGVLSCQPHESLGEVIDRIAREQVHRLVLVDETQHLLGVVSLSDILQALVLSPAGIDA).

Belongs to the 5'-AMP-activated protein kinase gamma subunit family. AMPK is a heterotrimer of an alpha catalytic subunit (PRKAA1 or PRKAA2), a beta (PRKAB1 or PRKAB2) and a gamma non-catalytic subunits (PRKAG1, PRKAG2 or PRKAG3). Interacts with FNIP1 and FNIP2. Post-translationally, phosphorylated by ULK1; leading to negatively regulate AMPK activity and suggesting the existence of a regulatory feedback loop between ULK1 and AMPK. Glycosylated; O-GlcNAcylated by OGT, promoting the AMP-activated protein kinase (AMPK) activity.

In terms of biological role, AMP/ATP-binding subunit of AMP-activated protein kinase (AMPK), an energy sensor protein kinase that plays a key role in regulating cellular energy metabolism. In response to reduction of intracellular ATP levels, AMPK activates energy-producing pathways and inhibits energy-consuming processes: inhibits protein, carbohydrate and lipid biosynthesis, as well as cell growth and proliferation. AMPK acts via direct phosphorylation of metabolic enzymes, and by longer-term effects via phosphorylation of transcription regulators. AMPK also acts as a regulator of cellular polarity by remodeling the actin cytoskeleton; probably by indirectly activating myosin. The AMPK gamma3 subunit is a non-catalytic subunit with a regulatory role in muscle energy metabolism. It mediates binding to AMP, ADP and ATP, leading to AMPK activation or inhibition: AMP-binding results in allosteric activation of alpha catalytic subunit (PRKAA1 or PRKAA2) both by inducing phosphorylation and preventing dephosphorylation of catalytic subunits. ADP also stimulates phosphorylation, without stimulating already phosphorylated catalytic subunit. ATP promotes dephosphorylation of catalytic subunit, rendering the AMPK enzyme inactive. The chain is 5'-AMP-activated protein kinase subunit gamma-3 (Prkag3) from Mus musculus (Mouse).